We begin with the raw amino-acid sequence, 454 residues long: Protoheme IX farnesyltransferase 1 (454 aa).

The unknown stretch occupies residues 1-186 (MRTTGFSGLL…AYFELTKPRL (186 aa)). Helical transmembrane passes span 9 to 29 (LLSA…TAAL), 59 to 79 (GVAA…WSET), 87 to 107 (LALA…VATG), and 113 to 133 (LHLF…AWHL). Positions 137-164 (TGSDDAPESPPELAPPVDEEPAATEQPA) are disordered. 9 helical membrane-spanning segments follow: residues 186–206 (LMWL…TPTV), 209–229 (VVFT…FNHV), 251–271 (VPVA…LWAF), 276–296 (LLAA…YTLI), 300–320 (NTVQ…LIGY), 321–341 (AAVT…IFLW), 377–397 (HIVF…AVTD), 398–418 (LGWL…WAVV), and 433–453 (FHAS…DSLA). Residues 187–451 (MWLLCLVAGA…LVLVAILIDS (265 aa)) form a protoheme IX prenyltransferase region.

The protein in the C-terminal section; belongs to the UbiA prenyltransferase family. Protoheme IX farnesyltransferase subfamily.

It localises to the cell membrane. It catalyses the reaction heme b + (2E,6E)-farnesyl diphosphate + H2O = Fe(II)-heme o + diphosphate. It participates in porphyrin-containing compound metabolism; heme O biosynthesis; heme O from protoheme: step 1/1. Functionally, converts heme B (protoheme IX) to heme O by substitution of the vinyl group on carbon 2 of heme B porphyrin ring with a hydroxyethyl farnesyl side group. The polypeptide is Protoheme IX farnesyltransferase 1 (ctaB1) (Natronomonas pharaonis (strain ATCC 35678 / DSM 2160 / CIP 103997 / JCM 8858 / NBRC 14720 / NCIMB 2260 / Gabara) (Halobacterium pharaonis)).